We begin with the raw amino-acid sequence, 263 residues long: HTH-type transcriptional regulator KdgR (263 aa).

An HTH iclR-type domain is found at 13-74; sequence VSSVLKVFGI…GESEKYSLTL (62 aa). The H-T-H motif DNA-binding region spans 34-53; sequence ITELSQRVMMSKSTVYRFLQ. Residues 89-258 enclose the IclR-ED domain; that stretch reads LIRSADIQMR…ARKISAQMGY (170 aa).

Its subcellular location is the cytoplasm. Its function is as follows. Transcriptional repressor that negatively regulates the expression of kdgT, kdgK and kdgA, which encode proteins involved in transport and catabolism of 2-keto-3-deoxygluconate (KDG). Also represses expression of eda, which encodes the Entner-Doudoroff aldolase, by binding to its P2 promoter region. This chain is HTH-type transcriptional regulator KdgR, found in Escherichia coli (strain K12).